Reading from the N-terminus, the 47-residue chain is Photosystem II reaction center protein K (47 aa).

A propeptide spanning residues 1 to 10 (MALINFDLLA) is cleaved from the precursor. Residues 26 to 46 (LPLIPLFFFLLVFVWQAAVGF) form a helical membrane-spanning segment.

It belongs to the PsbK family. As to quaternary structure, PSII is composed of 1 copy each of membrane proteins PsbA, PsbB, PsbC, PsbD, PsbE, PsbF, PsbH, PsbI, PsbJ, PsbK, PsbL, PsbM, PsbT, PsbX, PsbY, Psb30/Ycf12, peripheral proteins PsbO, CyanoQ (PsbQ), PsbU, PsbV and a large number of cofactors. It forms dimeric complexes.

It localises to the cellular thylakoid membrane. Functionally, one of the components of the core complex of photosystem II (PSII). PSII is a light-driven water:plastoquinone oxidoreductase that uses light energy to abstract electrons from H(2)O, generating O(2) and a proton gradient subsequently used for ATP formation. It consists of a core antenna complex that captures photons, and an electron transfer chain that converts photonic excitation into a charge separation. The polypeptide is Photosystem II reaction center protein K (Prochlorococcus marinus (strain NATL2A)).